Here is a 259-residue protein sequence, read N- to C-terminus: Phospholipase YtpA (259 aa).

Ser-88 functions as the Nucleophile in the catalytic mechanism. Catalysis depends on charge relay system residues Asp-206 and His-236.

Belongs to the AB hydrolase superfamily.

The protein operates within antibiotic biosynthesis; bacilysocin biosynthesis. Functionally, phospholipase involved in the biosynthesis of the antibiotic bacilysocin. It probably catalyzes the hydrolysis of the 2-sn-acyl moiety of phosphatidylglycerol to produce bacilysocin (lysophosphatidylglycerol). Is also able to catalyze the hydrolysis reaction of one acyl bond in phosphatidylcholine in vitro (actual cleavage point is unknown), resulting in lysophosphatidylcholine. The polypeptide is Phospholipase YtpA (ytpA) (Bacillus subtilis (strain 168)).